The primary structure comprises 370 residues: CCA-adding enzyme (370 aa).

ATP contacts are provided by Gly8 and Arg11. 2 residues coordinate CTP: Gly8 and Arg11. 2 residues coordinate Mg(2+): Asp21 and Asp23. 3 residues coordinate ATP: Arg91, Arg137, and Arg140. Residues Arg91, Arg137, and Arg140 each coordinate CTP.

This sequence belongs to the tRNA nucleotidyltransferase/poly(A) polymerase family. Bacterial CCA-adding enzyme type 2 subfamily. Requires Mg(2+) as cofactor.

The catalysed reaction is a tRNA precursor + 2 CTP + ATP = a tRNA with a 3' CCA end + 3 diphosphate. It carries out the reaction a tRNA with a 3' CCA end + 2 CTP + ATP = a tRNA with a 3' CCACCA end + 3 diphosphate. Functionally, catalyzes the addition and repair of the essential 3'-terminal CCA sequence in tRNAs without using a nucleic acid template. Adds these three nucleotides in the order of C, C, and A to the tRNA nucleotide-73, using CTP and ATP as substrates and producing inorganic pyrophosphate. tRNA 3'-terminal CCA addition is required both for tRNA processing and repair. Also involved in tRNA surveillance by mediating tandem CCA addition to generate a CCACCA at the 3' terminus of unstable tRNAs. While stable tRNAs receive only 3'-terminal CCA, unstable tRNAs are marked with CCACCA and rapidly degraded. This Pseudomonas putida (strain W619) protein is CCA-adding enzyme.